Consider the following 1762-residue polypeptide: Non-reducing polyketide synthase PKS8-1 (1762 aa).

Residues D17 to G247 form an N-terminal acylcarrier protein transacylase domain (SAT) region. A Ketosynthase family 3 (KS3) domain is found at Q385–E819. Catalysis depends on for beta-ketoacyl synthase activity residues C558, H694, and H737. Positions F920 to A1240 are malonyl-CoA:ACP transacylase (MAT) domain. Residues T1308 to S1622 form a product template (PT) domain region. Positions Q1312–W1448 are N-terminal hotdog fold. One can recognise a PKS/mFAS DH domain in the interval Q1312 to N1618. Catalysis depends on H1344, which acts as the Proton acceptor; for dehydratase activity. The segment at A1471–N1618 is C-terminal hotdog fold. Catalysis depends on D1529, which acts as the Proton donor; for dehydratase activity. The disordered stretch occupies residues R1632–S1689. Residues P1671–A1680 are compositionally biased toward pro residues. Residues D1685–Y1762 enclose the Carrier domain. S1722 carries the post-translational modification O-(pantetheine 4'-phosphoryl)serine.

It carries out the reaction holo-[ACP] + 8 malonyl-CoA + 8 H(+) = atrochrysone carboxyl-[ACP] + 8 CO2 + 8 CoA + 2 H2O. The protein operates within secondary metabolite biosynthesis. Non-reducing polyketide synthase; part of the gene cluster that mediates the biosynthesis of an emodin derivative that may be involved in black Sigatoka disease of banana. The pathway begins with the synthesis of atrochrysone thioester by the polyketide synthase PKS8-1. The atrochrysone carboxyl ACP thioesterase MYCFIDRAFT_190111 then breaks the thioester bond and releases the atrochrysone carboxylic acid from PKS8-1. The decarboxylase MYCFIDRAFT_34057 then catalyzes the concerted decarboxylation-elimination required to convert atochrysone carboxylic acid into emodin anthrone, which is further oxidized to emodin by the anthrone oxygenase MYCFIDRAFT_34418. The functions of the other tailoring enzymes as well as the final product of the cluster have still to be identified. This chain is Non-reducing polyketide synthase PKS8-1 (PKS8-1), found in Pseudocercospora fijiensis (strain CIRAD86) (Black leaf streak disease fungus).